A 378-amino-acid chain; its full sequence is Chlorophyll synthase, chloroplastic (378 aa).

The transit peptide at 1–45 (MATSHPLAAAAATSSSSATFRPPLRFLSSPPSSLTLNRRRSFPVV) directs the protein to the chloroplast. 7 consecutive transmembrane segments (helical) span residues 173–193 (VITQIWVLLLGGLGLGALLDI), 199–219 (FPIIFYLALGGSLLSYIYSAP), 232–252 (FALGASYIGLPWWAGQALFGT), 257–277 (IVVLTCLYSIAGLGIAIVNDF), 302–322 (WICVGAIDITQLSVAAYLLST), 327–347 (YALALLGLTIPQVILQFQYFL), and 357–377 (YQASAQPFFVFGLLVTALATS).

It belongs to the UbiA prenyltransferase family. Chlorophyll synthase subfamily. Mg(2+) serves as cofactor. Requires Zn(2+) as cofactor. Mn(2+) is required as a cofactor.

Its subcellular location is the plastid. The protein resides in the chloroplast membrane. The catalysed reaction is phytyl diphosphate + chlorophyllide a + H(+) = chlorophyll a + diphosphate. Its activity is regulated as follows. Inhibited by N-phenylmaleimide (NPM) and diacetyl. Its function is as follows. Involved in one of the last steps of the biosynthesis of chlorophyll a. Catalyzes the esterification of chlorophillide a with either geranylgeranyldiphosphate (GGPP) or phytyldiphosphate (PhyPP). May also use with a lower efficiency the monophosphates GGMP and PhyMP, but not the non-phosphorylated alcohols geranylgeraniol and phytol. The tetraprenyl diphosphate must bind to the enzyme as the first substrate and esterification occurs when this pre-loaded enzyme meets the second substrate, chlorophyllide. This Avena sativa (Oat) protein is Chlorophyll synthase, chloroplastic (CHLG).